The chain runs to 99 residues: Keratinocyte differentiation-associated protein (99 aa).

The first 22 residues, 1–22, serve as a signal peptide directing secretion; the sequence is MKIPVLPAVVLLSLLVLHSAQG.

In terms of tissue distribution, highly expressed in skin and detected at lower levels in thymus. In skin, found exclusively in lamellar granules of granular keratinocytes and in the intracellular space of the stratum corneum. Also highly expressed in oral mucosa, tongue, esophagus, and stomach, and at much lower levels in bladder and uterus. Not detected in gastrointestinal mucosa.

Its subcellular location is the secreted. May act as a soluble regulator of keratinocyte differentiation. May play an important role in embryonic skin morphogenesis. The chain is Keratinocyte differentiation-associated protein (KRTDAP) from Homo sapiens (Human).